The primary structure comprises 202 residues: NADH-quinone oxidoreductase subunit C (202 aa).

This sequence belongs to the complex I 30 kDa subunit family. As to quaternary structure, NDH-1 is composed of 14 different subunits. Subunits NuoB, C, D, E, F, and G constitute the peripheral sector of the complex.

The protein localises to the cell inner membrane. The enzyme catalyses a quinone + NADH + 5 H(+)(in) = a quinol + NAD(+) + 4 H(+)(out). NDH-1 shuttles electrons from NADH, via FMN and iron-sulfur (Fe-S) centers, to quinones in the respiratory chain. The immediate electron acceptor for the enzyme in this species is believed to be ubiquinone. Couples the redox reaction to proton translocation (for every two electrons transferred, four hydrogen ions are translocated across the cytoplasmic membrane), and thus conserves the redox energy in a proton gradient. In Bartonella quintana (strain Toulouse) (Rochalimaea quintana), this protein is NADH-quinone oxidoreductase subunit C.